A 261-amino-acid polypeptide reads, in one-letter code: Cytochrome c oxidase subunit 3 (261 aa).

Over methionine 1–proline 15 the chain is Mitochondrial matrix. Residues tryptophan 16–tryptophan 34 form a helical membrane-spanning segment. Residues phenylalanine 35–methionine 40 lie on the Mitochondrial intermembrane side of the membrane. Residues threonine 41 to threonine 66 form a helical membrane-spanning segment. The Mitochondrial matrix portion of the chain corresponds to tyrosine 67–threonine 72. Residues proline 73–serine 105 traverse the membrane as a helical segment. The Mitochondrial intermembrane portion of the chain corresponds to leucine 106–glutamate 128. The chain crosses the membrane as a helical span at residues valine 129–methionine 152. Over glutamate 153–asparagine 155 the chain is Mitochondrial matrix. Residues arginine 156–glutamate 183 traverse the membrane as a helical segment. The Mitochondrial intermembrane portion of the chain corresponds to serine 184–aspartate 190. A helical membrane pass occupies residues glycine 191 to leucine 223. At methionine 224–histidine 232 the chain is on the mitochondrial matrix side. Residues phenylalanine 233–isoleucine 256 form a helical membrane-spanning segment. Residues tyrosine 257–serine 261 lie on the Mitochondrial intermembrane side of the membrane.

It belongs to the cytochrome c oxidase subunit 3 family. As to quaternary structure, component of the cytochrome c oxidase (complex IV, CIV), a multisubunit enzyme composed of 14 subunits. The complex is composed of a catalytic core of 3 subunits MT-CO1, MT-CO2 and MT-CO3, encoded in the mitochondrial DNA, and 11 supernumerary subunits COX4I1 (or COX4I2), COX5A, COX5B, COX6A1 (or COX6A2), COX6B1 (or COX6B2), COX6C, COX7A2 (or COX7A1), COX7B, COX7C, COX8A and NDUFA4, which are encoded in the nuclear genome. The complex exists as a monomer or a dimer and forms supercomplexes (SCs) in the inner mitochondrial membrane with NADH-ubiquinone oxidoreductase (complex I, CI) and ubiquinol-cytochrome c oxidoreductase (cytochrome b-c1 complex, complex III, CIII), resulting in different assemblies (supercomplex SCI(1)III(2)IV(1) and megacomplex MCI(2)III(2)IV(2)).

It is found in the mitochondrion inner membrane. It catalyses the reaction 4 Fe(II)-[cytochrome c] + O2 + 8 H(+)(in) = 4 Fe(III)-[cytochrome c] + 2 H2O + 4 H(+)(out). Component of the cytochrome c oxidase, the last enzyme in the mitochondrial electron transport chain which drives oxidative phosphorylation. The respiratory chain contains 3 multisubunit complexes succinate dehydrogenase (complex II, CII), ubiquinol-cytochrome c oxidoreductase (cytochrome b-c1 complex, complex III, CIII) and cytochrome c oxidase (complex IV, CIV), that cooperate to transfer electrons derived from NADH and succinate to molecular oxygen, creating an electrochemical gradient over the inner membrane that drives transmembrane transport and the ATP synthase. Cytochrome c oxidase is the component of the respiratory chain that catalyzes the reduction of oxygen to water. Electrons originating from reduced cytochrome c in the intermembrane space (IMS) are transferred via the dinuclear copper A center (CU(A)) of subunit 2 and heme A of subunit 1 to the active site in subunit 1, a binuclear center (BNC) formed by heme A3 and copper B (CU(B)). The BNC reduces molecular oxygen to 2 water molecules using 4 electrons from cytochrome c in the IMS and 4 protons from the mitochondrial matrix. In Homo sapiens (Human), this protein is Cytochrome c oxidase subunit 3 (MT-CO3).